The following is a 98-amino-acid chain: Protein Vpr (98 aa).

The tract at residues Met-1 to Leu-42 is homooligomerization. 2 positions are modified to phosphoserine; by host: Ser-79 and Ser-98.

Belongs to the HIV-1 VPR protein family. As to quaternary structure, homooligomer, may form homodimer. Interacts with p6-gag region of the Pr55 Gag precursor protein through a (Leu-X-X)4 motif near the C-terminus of the P6gag protein. Interacts with host UNG. May interact with host RAD23A/HHR23A. Interacts with host VPRBP/DCAF1, leading to hijack the CUL4A-RBX1-DDB1-DCAF1/VPRBP complex, mediating ubiquitination of host proteins such as TERT and ZGPAT and arrest of the cell cycle in G2 phase. In terms of processing, phosphorylated on several residues by host. These phosphorylations regulate VPR activity for the nuclear import of the HIV-1 pre-integration complex.

The protein localises to the virion. It is found in the host nucleus. Its subcellular location is the host extracellular space. Its function is as follows. During virus replication, may deplete host UNG protein, and incude G2-M cell cycle arrest. Acts by targeting specific host proteins for degradation by the 26S proteasome, through association with the cellular CUL4A-DDB1 E3 ligase complex by direct interaction with host VPRPB/DCAF-1. Cell cycle arrest reportedly occurs within hours of infection and is not blocked by antiviral agents, suggesting that it is initiated by the VPR carried into the virion. Additionally, VPR induces apoptosis in a cell cycle dependent manner suggesting that these two effects are mechanistically linked. Detected in the serum and cerebrospinal fluid of AIDS patient, VPR may also induce cell death to bystander cells. In terms of biological role, during virus entry, plays a role in the transport of the viral pre-integration (PIC) complex to the host nucleus. This function is crucial for viral infection of non-dividing macrophages. May act directly at the nuclear pore complex, by binding nucleoporins phenylalanine-glycine (FG)-repeat regions. In Pan troglodytes (Chimpanzee), this protein is Protein Vpr.